A 633-amino-acid chain; its full sequence is uncharacterized protein (633 aa).

The tract at residues 12 to 43 (ESGTNNYSDTIANGNTLPPRSKKGHSGRRKRS) is disordered. A compositionally biased stretch (polar residues) spans 13–29 (SGTNNYSDTIANGNTLP). Residues 31–42 (RSKKGHSGRRKR) show a composition bias toward basic residues. 2 helical membrane-spanning segments follow: residues 99-118 (ILFGLCCTGTFLKLLISSAL) and 217-233 (NCAFPMTLNLALLITAC). Residues 593–612 (DAETNKATGSAKSENIETKS) are disordered.

It localises to the membrane. This is an uncharacterized protein from Saccharomyces cerevisiae (strain ATCC 204508 / S288c) (Baker's yeast).